The chain runs to 419 residues: Effector protein BipC (419 aa).

Disordered regions lie at residues 62–94 and 338–402; these read VAGS…GLER and LQSG…AKSQ. 2 stretches are compositionally biased toward basic and acidic residues: residues 71-94 and 380-392; these read ELAR…GLER and TRDE…REAA.

This sequence belongs to the SctB/SipC family.

The protein resides in the secreted. The sequence is that of Effector protein BipC (bipC) from Burkholderia pseudomallei (strain 1710b).